Here is a 270-residue protein sequence, read N- to C-terminus: Putative serine acetyltransferase (270 aa).

This sequence belongs to the transferase hexapeptide repeat family.

Its subcellular location is the cytoplasm. The protein localises to the nucleus. The catalysed reaction is L-serine + acetyl-CoA = O-acetyl-L-serine + CoA. It participates in amino-acid biosynthesis; L-cysteine biosynthesis; L-cysteine from L-serine: step 1/2. The protein is Putative serine acetyltransferase of Schizosaccharomyces pombe (strain 972 / ATCC 24843) (Fission yeast).